The following is a 564-amino-acid chain: Hexose transporter HXT13 (564 aa).

The Cytoplasmic portion of the chain corresponds to 1–52; that stretch reads MSSAQSSIDSDGDVRDADIHVAPPVEKEWSDGFDDNEVINGDNVEPPKRGLI. Residues 53 to 73 form a helical membrane-spanning segment; it reads GYLVIYLLCYPISFGGFLPGW. Over 74–109 the chain is Extracellular; it reads DSGITAGFINMDNFKMNFGSYKHSTGEYYLSNVRMG. Residues 110–130 traverse the membrane as a helical segment; it reads LLVAMFSIGCAIGGLIFARLA. Residues 131-136 lie on the Cytoplasmic side of the membrane; it reads DTLGRR. A helical transmembrane segment spans residues 137–157; that stretch reads LAIVIVVLVYMVGAIIQISSN. Residues 158–167 lie on the Extracellular side of the membrane; sequence HKWYQYFVGK. Residues 168-188 traverse the membrane as a helical segment; the sequence is IIYGLGAGGCSVLCPMLLSEI. Residues 189 to 194 lie on the Cytoplasmic side of the membrane; it reads APTDLR. Residues 195 to 215 form a helical membrane-spanning segment; sequence GGLVSLYQLNMTFGIFLGYCS. Topologically, residues 216 to 229 are extracellular; the sequence is VYGTRKYDNTAQWR. A helical transmembrane segment spans residues 230–250; that stretch reads VPLGLCFLWALIIIIGMLLVP. The Cytoplasmic portion of the chain corresponds to 251 to 333; sequence ESPRYLIECE…VQTFLQLTGE (83 aa). The helical transmembrane segment at 334-350 threads the bilayer; sequence NYFFFYGTTIFKSVGLT. Topologically, residues 351 to 356 are extracellular; it reads DGFETS. A helical membrane pass occupies residues 357–374; the sequence is IVLGTVNFFSTIIAVMVV. Topologically, residues 375–381 are cytoplasmic; sequence DKIGRRK. A helical membrane pass occupies residues 382–402; the sequence is CLLFGAAGMMACMVIFASIGV. Topologically, residues 403–424 are extracellular; it reads KCLYPHGQDGPSSKGAGNAMIV. The chain crosses the membrane as a helical span at residues 425-445; it reads FTCFYIFCFATTWAPVAYIVV. The Cytoplasmic segment spans residues 446–462; that stretch reads AESFPSKVKSRAMSIST. The helical transmembrane segment at 463–483 threads the bilayer; that stretch reads ACNWLWQFLIGFFTPFITGSI. Position 484 (His484) is a topological domain, extracellular. Residues 485–505 form a helical membrane-spanning segment; that stretch reads FYYGYVFVGCLVAMFLYVFFF. The Cytoplasmic portion of the chain corresponds to 506 to 564; it reads LPETIGLSLEEIQLLYEEGIKPWKSASWVPPSRRGISSEESKTEKKDWKKFLKFSKNSD. The segment at 530–551 is disordered; the sequence is SASWVPPSRRGISSEESKTEKK. Positions 541–551 are enriched in basic and acidic residues; the sequence is ISSEESKTEKK.

This sequence belongs to the major facilitator superfamily. Sugar transporter (TC 2.A.1.1) family.

Its subcellular location is the membrane. In terms of biological role, probable glucose transporter. The polypeptide is Hexose transporter HXT13 (HXT13) (Saccharomyces cerevisiae (strain ATCC 204508 / S288c) (Baker's yeast)).